The following is a 228-amino-acid chain: UPF0173 metal-dependent hydrolase BLi03080/BL00413 (228 aa).

It belongs to the UPF0173 family.

The sequence is that of UPF0173 metal-dependent hydrolase BLi03080/BL00413 from Bacillus licheniformis (strain ATCC 14580 / DSM 13 / JCM 2505 / CCUG 7422 / NBRC 12200 / NCIMB 9375 / NCTC 10341 / NRRL NRS-1264 / Gibson 46).